Consider the following 869-residue polypeptide: Iron-sulfur cluster assembly SufBD family protein ML0593 (869 aa).

The region spanning 344–477 (LLGLWLGDGH…VRQLAIGCGL (134 aa)) is the DOD-type homing endonuclease domain.

The protein belongs to the iron-sulfur cluster assembly SufBD family. Post-translationally, this protein undergoes a protein self splicing that involves a post-translational excision of the intervening region (intein) followed by peptide ligation.

In Mycobacterium leprae (strain TN), this protein is Iron-sulfur cluster assembly SufBD family protein ML0593.